The chain runs to 376 residues: Multiphosphoryl transfer protein (376 aa).

The PTS EIIA type-2 domain occupies 2–142 (FQLSVQDIHP…EELRALLMGE (141 aa)). H62 (tele-phosphohistidine intermediate; for EIIA activity) is an active-site residue. A Phosphohistidine; by HPr modification is found at H62. The m domain stretch occupies residues 156–284 (TLDIVASDLL…LTSDDAPTDD (129 aa)). In terms of domain architecture, HPr spans 285 to 375 (VLSAEFVVRN…DAIAAGLGEG (91 aa)). H299 (pros-phosphohistidine intermediate; for HPr activity) is an active-site residue. Residue H299 is modified to Phosphohistidine; by EI.

It is found in the cytoplasm. Functionally, the phosphoenolpyruvate-dependent sugar phosphotransferase system (sugar PTS), a major carbohydrate active transport system, catalyzes the phosphorylation of incoming sugar substrates concomitantly with their translocation across the cell membrane. The enzyme II FruAB PTS system is involved in fructose transport. In Escherichia coli O157:H7, this protein is Multiphosphoryl transfer protein.